Reading from the N-terminus, the 370-residue chain is Mitogen-activated protein kinase 3 (370 aa).

Residues 32 to 319 form the Protein kinase domain; sequence YVPIKPIGRG…VTEALEHPYM (288 aa). ATP-binding positions include 38–46 and Lys-61; that span reads IGRGAYGIV. Catalysis depends on Asp-158, which acts as the Proton acceptor. Thr-191 carries the phosphothreonine modification. Residues 191-193 carry the TXY motif; it reads TEY. At Tyr-193 the chain carries Phosphotyrosine.

This sequence belongs to the protein kinase superfamily. CMGC Ser/Thr protein kinase family. MAP kinase subfamily. In terms of processing, dually phosphorylated on Thr-191 and Tyr-193, which activates the enzyme.

It carries out the reaction L-seryl-[protein] + ATP = O-phospho-L-seryl-[protein] + ADP + H(+). The catalysed reaction is L-threonyl-[protein] + ATP = O-phospho-L-threonyl-[protein] + ADP + H(+). With respect to regulation, activated by threonine and tyrosine phosphorylation. The polypeptide is Mitogen-activated protein kinase 3 (MPK3) (Oryza sativa subsp. japonica (Rice)).